Here is a 418-residue protein sequence, read N- to C-terminus: Gamma-glutamyl phosphate reductase (418 aa).

This sequence belongs to the gamma-glutamyl phosphate reductase family.

Its subcellular location is the cytoplasm. The catalysed reaction is L-glutamate 5-semialdehyde + phosphate + NADP(+) = L-glutamyl 5-phosphate + NADPH + H(+). Its pathway is amino-acid biosynthesis; L-proline biosynthesis; L-glutamate 5-semialdehyde from L-glutamate: step 2/2. Its function is as follows. Catalyzes the NADPH-dependent reduction of L-glutamate 5-phosphate into L-glutamate 5-semialdehyde and phosphate. The product spontaneously undergoes cyclization to form 1-pyrroline-5-carboxylate. The protein is Gamma-glutamyl phosphate reductase of Desulforapulum autotrophicum (strain ATCC 43914 / DSM 3382 / VKM B-1955 / HRM2) (Desulfobacterium autotrophicum).